A 612-amino-acid chain; its full sequence is Beta-mannosyltransferase 5 (612 aa).

Residues 1-12 are Cytoplasmic-facing; that stretch reads MVQKQYRFAPKS. Residues 13–33 form a helical membrane-spanning segment; that stretch reads IFTFVFLCFVAIVVIISTSSL. The Extracellular segment spans residues 34–612; it reads VQVEESLDPI…YRAHLKRWQN (579 aa). Residues Asn224, Asn230, and Asn480 are each glycosylated (N-linked (GlcNAc...) asparagine).

It belongs to the BMT family.

Its subcellular location is the membrane. Its function is as follows. Beta-mannosyltransferase involved in cell wall biosynthesis. Required for beta-1,2-mannose transfer on phospholipomannan. The sequence is that of Beta-mannosyltransferase 5 (BMT5) from Candida albicans (strain SC5314 / ATCC MYA-2876) (Yeast).